Here is a 183-residue protein sequence, read N- to C-terminus: Inner membrane-spanning protein YciB (183 aa).

5 helical membrane-spanning segments follow: residues 22–44, 53–73, 76–96, 121–141, and 153–173; these read VQAA…RILF, IVGL…DLAF, WKVT…QYVF, LGWA…SQLF, and GFTG…YPYI.

The protein belongs to the YciB family.

The protein localises to the cell inner membrane. Its function is as follows. Plays a role in cell envelope biogenesis, maintenance of cell envelope integrity and membrane homeostasis. In Haemophilus ducreyi (strain 35000HP / ATCC 700724), this protein is Inner membrane-spanning protein YciB.